The sequence spans 349 residues: Increased DNA methylation 2 (349 aa).

A disordered region spans residues 210 to 230 (EDNAGTCTSGEESDVAAKPEV). In terms of domain architecture, sHSP spans 233-349 (EAHGGLMVGL…VMKNLQKQTV (117 aa)).

Belongs to the small heat shock protein (HSP20) family. Homodimer or oligomer. May form an 16-mer complex. Interacts with MBD7 (via C-terminus). Interacts with IDM1 (via N-terminus). Interacts with IMD3. Part of a complex made of MBD7, IDM1, IDM2, IDM3 and ROS1. As to expression, expressed in cotyledons and hypocotyls in young seedlings.

Its subcellular location is the nucleus. It is found in the nucleoplasm. In terms of biological role, prevents DNA hypermethylation and transcriptional silencing of transgenes and of some endogenous genes. May act as a molecular chaperone of IDM1, regulating its H3K18 acetylation activity. This chain is Increased DNA methylation 2, found in Arabidopsis thaliana (Mouse-ear cress).